A 539-amino-acid polypeptide reads, in one-letter code: Glutamyl-tRNA(Gln) amidotransferase subunit A, mitochondrial (539 aa).

Catalysis depends on charge relay system residues Lys94 and Ser181. Catalysis depends on Ser205, which acts as the Acyl-ester intermediate.

It belongs to the amidase family. GatA subfamily. Subunit of the heterotrimeric GatCAB amidotransferase (AdT) complex, composed of A, B and C subunits.

It is found in the mitochondrion. It carries out the reaction L-glutamyl-tRNA(Gln) + L-glutamine + ATP + H2O = L-glutaminyl-tRNA(Gln) + L-glutamate + ADP + phosphate + H(+). In terms of biological role, allows the formation of correctly charged Gln-tRNA(Gln) through the transamidation of misacylated Glu-tRNA(Gln) in the mitochondria. The reaction takes place in the presence of glutamine and ATP through an activated gamma-phospho-Glu-tRNA(Gln). This is Glutamyl-tRNA(Gln) amidotransferase subunit A, mitochondrial from Mycosarcoma maydis (Corn smut fungus).